Here is a 591-residue protein sequence, read N- to C-terminus: Aspartate--tRNA ligase (591 aa).

Position 172 (Glu-172) interacts with L-aspartate. Residues 196 to 199 (QLFK) form an aspartate region. L-aspartate is bound at residue Arg-218. ATP contacts are provided by residues 218 to 220 (RDE) and Gln-227. His-449 is an L-aspartate binding site. Glu-483 contributes to the ATP binding site. Arg-490 serves as a coordination point for L-aspartate. 535–538 (GLDR) serves as a coordination point for ATP.

It belongs to the class-II aminoacyl-tRNA synthetase family. Type 1 subfamily. In terms of assembly, homodimer.

It localises to the cytoplasm. It carries out the reaction tRNA(Asp) + L-aspartate + ATP = L-aspartyl-tRNA(Asp) + AMP + diphosphate. Its function is as follows. Catalyzes the attachment of L-aspartate to tRNA(Asp) in a two-step reaction: L-aspartate is first activated by ATP to form Asp-AMP and then transferred to the acceptor end of tRNA(Asp). This Actinobacillus pleuropneumoniae serotype 7 (strain AP76) protein is Aspartate--tRNA ligase.